We begin with the raw amino-acid sequence, 764 residues long: Phenylalanine--tRNA ligase beta subunit (764 aa).

The tRNA-binding domain occupies 38-148 (CIAPKNVVVG…GELVLGKELN (111 aa)). Positions 375-455 (LKDRTLTFQL…RFVGIDNLVS (81 aa)) constitute a B5 domain. Residues aspartate 433, aspartate 439, glutamate 442, and glutamate 443 each contribute to the Mg(2+) site. The FDX-ACB domain occupies 673–763 (SIYPSSVRDL…LEKEFNARLK (91 aa)).

The protein belongs to the phenylalanyl-tRNA synthetase beta subunit family. Type 1 subfamily. Tetramer of two alpha and two beta subunits. It depends on Mg(2+) as a cofactor.

Its subcellular location is the cytoplasm. The catalysed reaction is tRNA(Phe) + L-phenylalanine + ATP = L-phenylalanyl-tRNA(Phe) + AMP + diphosphate + H(+). This Helicobacter pylori (strain ATCC 700392 / 26695) (Campylobacter pylori) protein is Phenylalanine--tRNA ligase beta subunit (pheT).